The primary structure comprises 517 residues: MTQTNRVIIFDTTLRDGEQSPGAAMTKEEKIRVARQLEKLGVDIIEAGFAAASPGDFEAVNAIAKTITKSTVCSLSRAIERDIRQAGEAVAPAPKKRIHTFIATSPIHMEYKLKMKPKQVIEAAVKAVKIAREYTDDVEFSCEDALRSEIDFLAEICGAVIEAGATTINIPDTVGYSIPYKTEEFFRELIAKTPNGGKVVWSAHCHNDLGLAVANSLAALKGGARQVECTVNGLGERAGNASVEEIVMALKVRHDLFGLETGIDTTQIVPSSKLVSTITGYPVQPNKAIVGANAFSHESGIHQDGVLKHRETYEIMSAESVGWATNRLSLGKLSGRNAFKTKLADLGIELESEEALNAAFARFKELADKKREIFDEDLHALVSDEMGSMNAESYKFISQKISTETGEEPRADIVFSIKGEEKRASATGSGPVDAIFKAIESVAQSGAALQIYSVNAVTQGTESQGETSVRLARGNRVVNGQGADTDVLVATAKAYLSALSKLEFSAAKPKAQGSGTI.

The 263-residue stretch at 7–269 (VIIFDTTLRD…ETGIDTTQIV (263 aa)) folds into the Pyruvate carboxyltransferase domain. The Mn(2+) site is built by D16, H204, H206, and N240. Positions 366–517 (LADKKREIFD…KPKAQGSGTI (152 aa)) are required for the condensation reaction. Not required to bind substrate. The tract at residues 395–517 (KFISQKISTE…KPKAQGSGTI (123 aa)) is regulatory domain.

It belongs to the alpha-IPM synthase/homocitrate synthase family. LeuA type 1 subfamily. Homodimer. Remains a homodimer in the presence of L-leucine. Requires Mn(2+) as cofactor.

The protein localises to the cytoplasm. The catalysed reaction is 3-methyl-2-oxobutanoate + acetyl-CoA + H2O = (2S)-2-isopropylmalate + CoA + H(+). It participates in amino-acid biosynthesis; L-leucine biosynthesis; L-leucine from 3-methyl-2-oxobutanoate: step 1/4. With respect to regulation, inhibited by 3-bromo substituents and Leu, the pathway end product. Catalyzes the condensation of the acetyl group of acetyl-CoA with 3-methyl-2-oxobutanoate (2-ketoisovalerate) to form 3-carboxy-3-hydroxy-4-methylpentanoate (2-isopropylmalate). Complements an E.coli deletion. The protein is 2-isopropylmalate synthase of Neisseria meningitidis serogroup B (strain ATCC BAA-335 / MC58).